Reading from the N-terminus, the 163-residue chain is NADH-quinone oxidoreductase subunit I (163 aa).

4Fe-4S ferredoxin-type domains lie at Leu-53 to Gly-83 and Thr-94 to Asn-123. 8 residues coordinate [4Fe-4S] cluster: Cys-63, Cys-66, Cys-69, Cys-73, Cys-103, Cys-106, Cys-109, and Cys-113.

It belongs to the complex I 23 kDa subunit family. NDH-1 is composed of 14 different subunits. Subunits NuoA, H, J, K, L, M, N constitute the membrane sector of the complex. It depends on [4Fe-4S] cluster as a cofactor.

It localises to the cell inner membrane. The enzyme catalyses a quinone + NADH + 5 H(+)(in) = a quinol + NAD(+) + 4 H(+)(out). NDH-1 shuttles electrons from NADH, via FMN and iron-sulfur (Fe-S) centers, to quinones in the respiratory chain. The immediate electron acceptor for the enzyme in this species is believed to be ubiquinone. Couples the redox reaction to proton translocation (for every two electrons transferred, four hydrogen ions are translocated across the cytoplasmic membrane), and thus conserves the redox energy in a proton gradient. This is NADH-quinone oxidoreductase subunit I from Parvibaculum lavamentivorans (strain DS-1 / DSM 13023 / NCIMB 13966).